The primary structure comprises 420 residues: Phosphoribosylamine--glycine ligase (420 aa).

Positions 108–314 (KQFMEKYAIP…FAALIAALLN (207 aa)) constitute an ATP-grasp domain. ATP is bound at residue 134–195 (LDERGVPIVI…EDFLAGEEFS (62 aa)). Residues E284 and N286 each coordinate Mg(2+).

It belongs to the GARS family. It depends on Mg(2+) as a cofactor. Mn(2+) is required as a cofactor.

It catalyses the reaction 5-phospho-beta-D-ribosylamine + glycine + ATP = N(1)-(5-phospho-beta-D-ribosyl)glycinamide + ADP + phosphate + H(+). It functions in the pathway purine metabolism; IMP biosynthesis via de novo pathway; N(1)-(5-phospho-D-ribosyl)glycinamide from 5-phospho-alpha-D-ribose 1-diphosphate: step 2/2. The sequence is that of Phosphoribosylamine--glycine ligase from Listeria innocua serovar 6a (strain ATCC BAA-680 / CLIP 11262).